The following is a 233-amino-acid chain: Protein AC81 (233 aa).

2 helical membrane-spanning segments follow: residues 171 to 191 (SFQTVLLTCAILLLLFNVEKF) and 194 to 214 (INLLIILLILLSLFCHNNYII).

Its subcellular location is the host nucleus. It localises to the host membrane. The protein resides in the virion. Its function is as follows. Plays an essential role in the assembly of nucleocapsids with envelopes. This is Protein AC81 (AC81) from Autographa californica nuclear polyhedrosis virus (AcMNPV).